The sequence spans 595 residues: Laccase-18 (595 aa).

The N-terminal stretch at 1–29 (MEKLSTAASLFCVVVAATALAMAVVGGEA) is a signal peptide. 2 Plastocyanin-like domains span residues 37 to 153 (MVHE…PRNG) and 162 to 316 (KDVP…YAGA). Residues asparagine 42 and asparagine 48 are each glycosylated (N-linked (GlcNAc...) asparagine). Histidine 87 and histidine 89 together coordinate Cu cation. Asparagine 121 is a glycosylation site (N-linked (GlcNAc...) asparagine). The Cu cation site is built by histidine 132 and histidine 134. N-linked (GlcNAc...) asparagine glycans are attached at residues asparagine 206, asparagine 345, asparagine 382, asparagine 402, asparagine 409, asparagine 439, and asparagine 470. A Plastocyanin-like 3 domain is found at 429–571 (DFPVRPPRPF…ATAFIVEDGP (143 aa)). Cu cation is bound by residues asparagine 488, histidine 491, histidine 493, histidine 550, cysteine 551, histidine 552, histidine 556, and methionine 561. Residues 570–595 (GPTPETSLPPPPPEFKRCGTNGLSQP) form a disordered region.

It belongs to the multicopper oxidase family. Cu cation serves as cofactor.

It is found in the secreted. Its subcellular location is the extracellular space. It localises to the apoplast. It carries out the reaction 4 hydroquinone + O2 = 4 benzosemiquinone + 2 H2O. Lignin degradation and detoxification of lignin-derived products. This is Laccase-18 (LAC18) from Oryza sativa subsp. japonica (Rice).